A 328-amino-acid chain; its full sequence is Malate dehydrogenase (328 aa).

13–19 (GGKGQIA) contacts NAD(+). R94 and R100 together coordinate substrate. NAD(+)-binding positions include N107, Q114, and 131–133 (VGN). 2 residues coordinate substrate: N133 and R164. H189 functions as the Proton acceptor in the catalytic mechanism.

Belongs to the LDH/MDH superfamily. MDH type 2 family.

The catalysed reaction is (S)-malate + NAD(+) = oxaloacetate + NADH + H(+). In terms of biological role, catalyzes the reversible oxidation of malate to oxaloacetate. This is Malate dehydrogenase from Chlamydia pneumoniae (Chlamydophila pneumoniae).